A 283-amino-acid polypeptide reads, in one-letter code: Myeloid differentiation primary response protein MyD88-A (283 aa).

Residues 27–105 (RLCLYLNPDA…DILTDLGPLI (79 aa)) enclose the Death domain. An intermediate domain region spans residues 106–143 (EADCMKYLEKKHVPLPIQDDKVDSSEQYRITKSDDPYG). Residues 147 to 281 (ETFDAFICYC…WFWDKLAKAL (135 aa)) enclose the TIR domain.

Its subcellular location is the cytoplasm. In terms of biological role, adapter protein involved in the Toll-like receptor and IL-1 receptor signaling pathway in the innate immune response. Activates expression of target genes in the Spemann organizer region during early embryonic development. Is required for normal axis formation. The chain is Myeloid differentiation primary response protein MyD88-A (myd88-a) from Xenopus laevis (African clawed frog).